The chain runs to 636 residues: Phosphomethylpyrimidine synthase (636 aa).

Positions 48–70 (DDTPTDFGGEKNPPVRVYDTSGP) are disordered. Substrate-binding positions include N231, M260, Y289, H325, 345 to 347 (SRG), 386 to 389 (DGLR), and E425. Residue H429 coordinates Zn(2+). Y452 is a substrate binding site. H493 contacts Zn(2+). [4Fe-4S] cluster-binding residues include C573, C576, and C581.

The protein belongs to the ThiC family. In terms of assembly, homodimer. Requires [4Fe-4S] cluster as cofactor.

The enzyme catalyses 5-amino-1-(5-phospho-beta-D-ribosyl)imidazole + S-adenosyl-L-methionine = 4-amino-2-methyl-5-(phosphooxymethyl)pyrimidine + CO + 5'-deoxyadenosine + formate + L-methionine + 3 H(+). It participates in cofactor biosynthesis; thiamine diphosphate biosynthesis. Functionally, catalyzes the synthesis of the hydroxymethylpyrimidine phosphate (HMP-P) moiety of thiamine from aminoimidazole ribotide (AIR) in a radical S-adenosyl-L-methionine (SAM)-dependent reaction. The chain is Phosphomethylpyrimidine synthase from Cellvibrio japonicus (strain Ueda107) (Pseudomonas fluorescens subsp. cellulosa).